Reading from the N-terminus, the 571-residue chain is Phototropic-responsive NPH3 family protein NPY1 (571 aa).

Residues 29–97 (SDVTIHVGEV…CYGMTVTLNA (69 aa)) enclose the BTB domain. The region spanning 210–468 (DWWVEDVCEL…VQVLYFEQLR (259 aa)) is the NPH3 domain. Position 409 is a phosphotyrosine (Tyr409). A disordered region spans residues 475-571 (ASVAASSHSP…SSRRRRHSIS (97 aa)). Basic and acidic residues predominate over residues 484 to 504 (PVEKTEENKGEEATKKVELSK). Positions 540-562 (SNKSSEVSSGSSQSPPAKSSSSS) are enriched in low complexity.

This sequence belongs to the NPH3 family. As to quaternary structure, component of a complex made of PINs (e.g. PIN1 and PIN2), MAB4/MELs (e.g. NPY1/MAB4 and NPY5/MEL1) and AGC kinases (e.g. D6PK and PID) at the plasma membrane. Binds directly to PIN2 and PID. Accumulates in organ primordia such as cotyledons, leaves and floral organs. Expressed mainly in the apical regions of embryos including cotyledon tips and the apical meristem. Induced by the transcription factor ARF5/MP at the periphery of inflorescence meristems. Highly expressed in primary root tips and radicles.

It localises to the late endosome. The protein resides in the cell membrane. It is found in the cytoplasm. Its subcellular location is the cytosol. It participates in protein modification; protein ubiquitination. May act as a substrate-specific adapter of an E3 ubiquitin-protein ligase complex (CUL3-RBX1-BTB) which mediates the ubiquitination and subsequent proteasomal degradation of target proteins. Coregulates with PID the auxin-mediated plant organogenesis. Regulates basipetal PIN proteins (e.g. PIN1) polarization to establish inward auxin transport from the L1 surface of incipient organ primordia; this process is essential for the progression of flower organs development. Recruited to the plasma membrane by PINs (e.g. PIN1 and PIN2) and, in concert with AGC kinases-mediated (e.g. D6PK and PID) PINs phosphorylation, maintains their cell polarity (apical or basal) through limiting lateral diffusion-based escape. Induces auxin response in inner cell layers through a shift in PIN1 localization. Influences cotyledon development by regulating auxin distribution mainly in the protodermal cell layer. May play an essential role in root gravitropic responses. The protein is Phototropic-responsive NPH3 family protein NPY1 of Arabidopsis thaliana (Mouse-ear cress).